The chain runs to 359 residues: 1-deoxy-D-xylulose 5-phosphate reductoisomerase (359 aa).

Residues Thr7, Gly8, Ser9, Ile10, Gly31, Lys32, Asn33, and Asn111 each coordinate NADPH. 1-deoxy-D-xylulose 5-phosphate is bound at residue Lys112. Glu113 contacts NADPH. Asp131 serves as a coordination point for Mn(2+). Positions 132, 133, 155, and 178 each coordinate 1-deoxy-D-xylulose 5-phosphate. Position 133 (Glu133) interacts with Mn(2+). Gly184 contributes to the NADPH binding site. Residues Ser191, Asn196, Lys197, and Glu200 each contribute to the 1-deoxy-D-xylulose 5-phosphate site. Residue Glu200 coordinates Mn(2+).

It belongs to the DXR family. The cofactor is Mg(2+). Requires Mn(2+) as cofactor.

It carries out the reaction 2-C-methyl-D-erythritol 4-phosphate + NADP(+) = 1-deoxy-D-xylulose 5-phosphate + NADPH + H(+). It functions in the pathway isoprenoid biosynthesis; isopentenyl diphosphate biosynthesis via DXP pathway; isopentenyl diphosphate from 1-deoxy-D-xylulose 5-phosphate: step 1/6. In terms of biological role, catalyzes the NADPH-dependent rearrangement and reduction of 1-deoxy-D-xylulose-5-phosphate (DXP) to 2-C-methyl-D-erythritol 4-phosphate (MEP). The polypeptide is 1-deoxy-D-xylulose 5-phosphate reductoisomerase (Campylobacter lari (strain RM2100 / D67 / ATCC BAA-1060)).